A 489-amino-acid polypeptide reads, in one-letter code: Cytochrome P450 monooxygenase AMT3 (489 aa).

A helical transmembrane segment spans residues 292 to 312; the sequence is LFMVAGTETTITALSGLVFLL. Cys436 contributes to the heme binding site.

Belongs to the cytochrome P450 family. Requires heme as cofactor.

The protein resides in the membrane. It functions in the pathway mycotoxin biosynthesis. In terms of biological role, cytochrome P450 monooxygenase; part of the gene clusters that mediate the biosynthesis of AM-toxins, host-selective toxins (HSTs) causing Alternaria blotch on apple, a worldwide distributed disease. AM-toxins are cyclic depsipeptides containing the 3 residues 2-hydroxy-isovaleric acid (2-HIV), dehydroalanine, L-alanine which are common for all 3 AM-toxins I to III. The fourth precursor is L-alpha-amino-methoxyphenyl-valeric acid (L-Amv) for AM-toxin I, L-alpha-amino-phenyl-valeric acid (L-Apv) for AM-toxin II, and L-alpha-amino-hydroxyphenyl-valeric acid (L-Ahv) for AM-toxin III. AM-toxins have two target sites for affecting susceptible apple cells; they cause invagination of the plasma membrane and electrolyte loss and chloroplast disorganization. The non-ribosomal peptide synthetase AMT1 contains 4 catalytic modules and is responsible for activation of each residue in AM-toxin. The aldo-keto reductase AMT2 catalyzes the conversion of 2-keto-isovaleric acid (2-KIV) to 2-hydroxy-isovaleric acid (2-HIV), one of the precursor residues incorporated by AMT1 during AM-toxin biosynthesis, by reduction of its ketone to an alcohol. The cytochrome P450 monooxygenase AMT3 and the thioesterase AMT4 are also important for AM-toxin production, but their exact function within the AM-toxin biosynthesis are not known yet. Up to 21 proteins (including AMT1 to AMT4) are predicted to be involved in AM-toxin biosynthesis since their expression ishighly up-regulated in AM-toxin-producing cultures. The protein is Cytochrome P450 monooxygenase AMT3 of Alternaria alternata (Alternaria rot fungus).